Here is a 381-residue protein sequence, read N- to C-terminus: E3 ubiquitin-protein ligase RNF13 (381 aa).

Positions methionine 1–alanine 34 are cleaved as a signal peptide. At aspartate 35–tyrosine 182 the chain is on the lumenal side. The region spanning lysine 65 to aspartate 160 is the PA domain. Asparagine 88 is a glycosylation site (N-linked (GlcNAc...) asparagine). The chain crosses the membrane as a helical span at residues tyrosine 183–isoleucine 203. The Cytoplasmic segment spans residues threonine 204 to valine 381. The segment at cysteine 240 to lysine 282 adopts an RING-type; atypical zinc-finger fold. The interval valine 285 to valine 381 is disordered. Acidic residues-rich tracts occupy residues serine 292–glutamate 304 and serine 339–glutamate 357.

Interacts with ERN1. Autoubiquitinated. Widely expressed (at protein level). In normal pancreas, expressed in islets, but not in ducts, nor in acini (at protein level).

The protein resides in the endoplasmic reticulum membrane. It localises to the late endosome membrane. The protein localises to the lysosome membrane. Its subcellular location is the nucleus inner membrane. The enzyme catalyses S-ubiquitinyl-[E2 ubiquitin-conjugating enzyme]-L-cysteine + [acceptor protein]-L-lysine = [E2 ubiquitin-conjugating enzyme]-L-cysteine + N(6)-ubiquitinyl-[acceptor protein]-L-lysine.. It functions in the pathway protein modification; protein ubiquitination. In terms of biological role, E3 ubiquitin-protein ligase that regulates cell proliferation. Involved in apoptosis regulation. Mediates ER stress-induced activation of JNK signaling pathway and apoptosis by promoting ERN1 activation and splicing of XBP1 mRNA. Also involved in protein trafficking and localization. The chain is E3 ubiquitin-protein ligase RNF13 from Homo sapiens (Human).